Consider the following 305-residue polypeptide: Serine/threonine-protein phosphatase PP-X isozyme 2 (305 aa).

Positions 51, 53, 79, and 111 each coordinate Mn(2+). The active-site Proton donor is the histidine 112. Mn(2+) is bound by residues histidine 161 and histidine 236.

It belongs to the PPP phosphatase family. PP-4 (PP-X) subfamily. Mn(2+) serves as cofactor. As to expression, ubiquitous, mostly expressed in root mersitems, flowers, and vascular tissues.

The protein localises to the plastid stroma. The catalysed reaction is O-phospho-L-seryl-[protein] + H2O = L-seryl-[protein] + phosphate. It carries out the reaction O-phospho-L-threonyl-[protein] + H2O = L-threonyl-[protein] + phosphate. In Arabidopsis thaliana (Mouse-ear cress), this protein is Serine/threonine-protein phosphatase PP-X isozyme 2 (PPX2).